The primary structure comprises 1324 residues: MSLNTSSNATPGDTQRLKNASLDVKQMLKNETESDIIADLRKKLHRAKKEKLEMTTKHNAELSSYESQIARLRSEVEKGEALRQRLEYDLAVARKEAGLGRRAAEERLAEAQRIQERLCAQNSELQGKANEIEKTFQISQEKWREECRRFEHDLEERDNIIQNCNQEYESLMQEKTRLQKTLQEILEKHEQEKTELESRVRETALGEFRLQTEEWEAERRELQLIVQEQDSAVQSMQKKVEQLEAEHMDCSDLLRRQTSELEFSTQREERLRKEFEATTLRVRKLEENIEAERAAHLESKFNSEIIQLRIRDLEGALQVEKASQAEAVADLEMIKNEFKEVESAYEREKQNTQESCAKLNLLEREYFSQNKKLNEEIEDQKKVIIDLSKRLQYNEKSCGELQEELVMAKKHQAFLVETCENNVRELESILGSFSVSAQWTSGVHKDKDKPPSFSVVLETLRRTLTDYQNKLEDASNEEKTSNELDSTKQKIETHIKNTKELQDKLTEVHKELSHLRAKCADREALITSLKVELQNVLHCWEKEKACAAQCESELQKLSQAFQKDSEEKLTFLHTLYQHLVAGCVLIKQPEGMLDKFSWSELCAVLQENVDALIADLNRANEKISHLEYICKNKSDTMRELQQTQEDTFNKVAEQIKAQESCWQKQKKELEFQYSELLLEVQRRAQKFQEIAEKNSEKLNRIETSHEQLVRENSHFKTTLSRTQREQTCLLAACALMAGALCPLYSRSCALSTQRDFLQEQVNSLELFKLEIRTLAQALSAVDEKKQEEAKTKKKTFKGLVRVFRKGVIAILAANRLKLLGQSCAFLFTWMESCKEGIGMLVCTGEPKDKRQFPKHQREQLRCLQALAWLTSSDLLGTVISSMTELQEVISKTDPNSRICGHLLIGAAKNSFAKLMDKLSSAMASIPLHSSRSITYVEKDSLVQRLARGLHKVNTLALKYGLCSHIPIMKSTAALQKQIFGFTQRLHAAEVERRSLRLEVTEYKRTVHEMKKELDKSQSLQTQLNEFKHSKLITHEKFESACEELNNALLREQQAQMLLNEQAQQLQELNYRLELHSSEEADKNQTLGEAVKSLSEAKMELRRKDQSLRQLNRHLTQLEQDKRRLEENIRDAESALRMAAKDKECVANHMRTIENMLHKVRDQISLSRTAATRNDFTLQLPKLHLETFAMEGLQGGPEVVACQAMIKSFMDVYQLASARISTLEKEMTSHRSHIATLKSELHTACLRENESLQSMGSRDHSNLSVPSRAAAPMDTVGDLLPLQAELDTTYTFLKETFVNTAPHSLSSQSSPGVPTNAKRPSQIGL.

Coiled coils occupy residues 29–296 (KNET…RAAH), 325–393 (AEAV…RLQY), 453–521 (FSVV…KCAD), 599–712 (SELC…VREN), and 981–1145 (FTQR…KECV). A compositionally biased stretch (polar residues) spans 1301 to 1312 (PHSLSSQSSPGV). The tract at residues 1301-1324 (PHSLSSQSSPGVPTNAKRPSQIGL) is disordered.

The protein is Coiled-coil domain-containing protein 171 (Ccdc171) of Mus musculus (Mouse).